A 545-amino-acid chain; its full sequence is Threonine--tRNA ligase catalytic subunit (545 aa).

A catalytic region spans residues 139-433; it reads DHRLIGEKLD…LLEHFKGKLP (295 aa). Residues Cys-231, His-282, and His-410 each contribute to the Zn(2+) site.

The protein belongs to the class-II aminoacyl-tRNA synthetase family. Homodimer. Probably interacts with its editing subunit. Requires Zn(2+) as cofactor.

It localises to the cytoplasm. It carries out the reaction tRNA(Thr) + L-threonine + ATP = L-threonyl-tRNA(Thr) + AMP + diphosphate + H(+). Functionally, catalyzes the attachment of threonine to tRNA(Thr) in a two-step reaction: L-threonine is first activated by ATP to form Thr-AMP and then transferred to the acceptor end of tRNA(Thr). Also activates L-serine and transfers it to tRNA(Thr) but cannot deacylate incorrectly charged amino acid; unlike most archaea the editing function is found in a freestanding protein. In Saccharolobus islandicus (strain M.16.27) (Sulfolobus islandicus), this protein is Threonine--tRNA ligase catalytic subunit.